The sequence spans 494 residues: NADPH:adrenodoxin oxidoreductase, mitochondrial (494 aa).

A mitochondrion-targeting transit peptide spans 1–34 (MAPRCWRWWSWSAWPGVRPLPSRSTPTPGFCKKF). Residues Ala51, Glu72, Leu80, and Val116 each coordinate FAD. Residues 187-190 (QGNV), 231-232 (RR), and Glu243 each bind NADP(+). Phosphoserine is present on Ser313. Residues Trp401 and 408-410 (GVI) contribute to the FAD site. Residue Gly408 participates in NADP(+) binding.

It belongs to the ferredoxin--NADP reductase type 1 family. As to quaternary structure, monomer. Interacts directly with FDX1. It depends on FAD as a cofactor.

The protein localises to the mitochondrion inner membrane. The catalysed reaction is 2 reduced [adrenodoxin] + NADP(+) + H(+) = 2 oxidized [adrenodoxin] + NADPH. The enzyme catalyses 2 reduced [2Fe-2S]-[ferredoxin] + NADP(+) + H(+) = 2 oxidized [2Fe-2S]-[ferredoxin] + NADPH. It participates in steroid metabolism; cholesterol metabolism. Serves as the first electron transfer protein in all the mitochondrial P450 systems including cholesterol side chain cleavage in all steroidogenic tissues, steroid 11-beta hydroxylation in the adrenal cortex, 25-OH-vitamin D3-24 hydroxylation in the kidney, and sterol C-27 hydroxylation in the liver. Also acts as a ferredoxin--NADP(+) reductase essential for coenzyme Q biosynthesis: together with FDX2, transfers the electrons required for the hydroxylation reaction performed by COQ6. This chain is NADPH:adrenodoxin oxidoreductase, mitochondrial (Fdxr), found in Rattus norvegicus (Rat).